Consider the following 425-residue polypeptide: MTSLQEYMVPIVVDGEVPPEIYVALRGTDKDKVKRMWTNANNPFALAKACSRGSAEIVGKPSSVYLKQYRSATYYVLQYPSGKLLLPVDEVDESVVDDIQNELLYVSVVRKNNLYFVTDIEPLVTKSKVERGEELREVADANGVSPDDLPALGYGYVTTSSSKIFTGTDKMIRNDAVNRLSLLMLLRFFTTAKVGGMPVHAFELTTPNTGKTTFAVRNIYLVNWGYIDEAPSFARLVMDAKTSALGLVFRNDGVFIDEIDKYGSNMRDVIHIMLTGMSHGVWKRAKGDTDAPSIVRRIPVYFAGNKDSSTLGTMSTRNYIKNVLVSMKLYQSLVDALLDRIAITIANEAEINASDYVSGYVIADTYLRGYISYVSSQATKMYKDLGIGNGRERQNINAINALCVATTNFDHCDEFAKSVSSGFLV.

This is an uncharacterized protein from Acidianus sp. F28 (AFV-2).